The chain runs to 584 residues: Interferon regulatory factor 2-binding protein 1 (584 aa).

Residues 60 to 127 (VLPEGRSPGP…SGRLPLPSPA (68 aa)) are disordered. Residues Ser66 and Ser125 each carry the phosphoserine modification. Arg177 carries the post-translational modification Omega-N-methylarginine. Ser186 carries the post-translational modification Phosphoserine. Positions 197-217 (EKEKQQRNADCLAELNEAMRG) form a coiled coil. Lys227 is covalently cross-linked (Glycyl lysine isopeptide (Lys-Gly) (interchain with G-Cter in SUMO2)). The tract at residues 346 to 420 (PAEALPQQYP…PYSAETPGVP (75 aa)) is disordered. Residues 354–369 (YPEPAPAALCGPPPRA) show a composition bias toward pro residues. 4 positions are modified to phosphoserine: Ser371, Ser384, Ser421, and Ser436. The segment at 433-495 (LGHSPKDPGG…VSGGGSGTGA (63 aa)) is disordered. Residue Lys438 forms a Glycyl lysine isopeptide (Lys-Gly) (interchain with G-Cter in SUMO2) linkage. The span at 449 to 463 (AGGASPAASSTAQPP) shows a compositional bias: low complexity. Ser453 and Ser457 each carry phosphoserine. The RING-type; degenerate zinc finger occupies 503–550 (CTLCRERLEDTHFVQCPSVPGHKFCFPCSREFIKAQGPAGEVYCPSGD). The segment at 503–550 (CTLCRERLEDTHFVQCPSVPGHKFCFPCSREFIKAQGPAGEVYCPSGD) is cys-rich.

This sequence belongs to the IRF2BP family. In terms of assembly, interacts with IRF2. Part of a corepressor complex containing IRF2 and IRF2BP2. Interacts with JDP2.

The protein resides in the nucleus. The catalysed reaction is S-ubiquitinyl-[E2 ubiquitin-conjugating enzyme]-L-cysteine + [acceptor protein]-L-lysine = [E2 ubiquitin-conjugating enzyme]-L-cysteine + N(6)-ubiquitinyl-[acceptor protein]-L-lysine.. In terms of biological role, acts as a transcriptional corepressor in a IRF2-dependent manner; this repression is not mediated by histone deacetylase activities. May act as an E3 ligase towards JDP2, enhancing its polyubiquitination. Represses ATF2-dependent transcriptional activation. This is Interferon regulatory factor 2-binding protein 1 (IRF2BP1) from Homo sapiens (Human).